The chain runs to 402 residues: F-box/kelch-repeat protein At4g39590 (402 aa).

Over residues 1–14 (MFPMSSTSRSSAAN) the composition is skewed to low complexity. A disordered region spans residues 1–37 (MFPMSSTSRSSAANNRKDPPRKKNKETPSPVTREPTS). Positions 27-37 (TPSPVTREPTS) are enriched in polar residues. One can recognise an F-box domain in the interval 35-81 (PTSIDSLPNDLLLNCFARVSRMYYPALSRVSKRFRSIVTSPEIYNTR). Kelch repeat units lie at residues 143–198 (NIYR…VVDG), 199–246 (KIYV…YRRA), 255–300 (KLYL…LFYW), and 302–341 (QGVF…DLGG).

The sequence is that of F-box/kelch-repeat protein At4g39590 from Arabidopsis thaliana (Mouse-ear cress).